Consider the following 393-residue polypeptide: S-adenosylmethionine synthase (393 aa).

Position 10 (Glu10) interacts with Mg(2+). His16 contributes to the ATP binding site. Residue Glu44 coordinates K(+). L-methionine contacts are provided by Glu57 and Gln100. ATP-binding positions include 168–170, 236–239, Asp247, 253–254, Ala270, Lys274, and Lys278; these read DGK, SGRF, and RK. Asp247 contributes to the L-methionine binding site. Lys278 is a binding site for L-methionine.

It belongs to the AdoMet synthase family. In terms of assembly, homotetramer. It depends on Mn(2+) as a cofactor. Mg(2+) is required as a cofactor. The cofactor is Co(2+). K(+) serves as cofactor.

It is found in the cytoplasm. It catalyses the reaction L-methionine + ATP + H2O = S-adenosyl-L-methionine + phosphate + diphosphate. Its pathway is amino-acid biosynthesis; S-adenosyl-L-methionine biosynthesis; S-adenosyl-L-methionine from L-methionine: step 1/1. Functionally, catalyzes the formation of S-adenosylmethionine from methionine and ATP. The reaction comprises two steps that are both catalyzed by the same enzyme: formation of S-adenosylmethionine (AdoMet) and triphosphate, and subsequent hydrolysis of the triphosphate. This is S-adenosylmethionine synthase (METK) from Musa acuminata (Banana).